A 492-amino-acid polypeptide reads, in one-letter code: uncharacterized protein (492 aa).

12 consecutive transmembrane segments (helical) span residues 16–36, 39–59, 107–127, 133–153, 162–182, 210–230, 243–263, 291–311, 350–370, 394–414, 429–449, and 454–474; these read FIAF…VMTM, VGPF…GVVL, SFNG…IPVV, IIIG…FISL, AIFY…ILGI, IIFI…LASI, FLIA…IISG, LVGG…NSLA, VLIS…IPFL, MAAA…FMIF, VSYV…LFPF, and VFNT…VGFF.

The protein to M.genitalium MG225.

Its subcellular location is the cell membrane. This is an uncharacterized protein from Mycoplasma genitalium (strain ATCC 33530 / DSM 19775 / NCTC 10195 / G37) (Mycoplasmoides genitalium).